The chain runs to 141 residues: Protein Turandot Z (141 aa).

The signal sequence occupies residues Met1 to Ala23.

This sequence belongs to the Turandot family.

It is found in the secreted. In terms of biological role, a humoral factor that may play a role in stress tolerance. This is Protein Turandot Z from Drosophila yakuba (Fruit fly).